The following is a 655-amino-acid chain: p-hydroxybenzoic acid efflux pump subunit AaeB (655 aa).

11 consecutive transmembrane segments (helical) span residues 13–33 (FAVKLATAIVLALFVGFHFQL), 38–58 (WAVLTAAIVAAGPAFAAGGEP), 69–89 (LRIIGTFIGCIAGLVIIIAMI), 93–113 (LLMILVCCIWAGFCTWISSLV), 121–141 (WGLAGYTALIIVITIQPEPLL), 152–172 (EIVIGIVCAIMADLLFSPRSI), 370–390 (LFWLWTGWTSGSGAMVMIAVV), 407–427 (FIYGTLAALPLGLLYFLVIIP), 431–451 (QSMLLLCISLAVLGFFLGIEV), 459–479 (MGALASTINIIVLDNPMTFHF), and 482–502 (FLDSALGQIVGCVLAFTVILL).

The protein belongs to the aromatic acid exporter ArAE (TC 2.A.85) family.

Its subcellular location is the cell inner membrane. Functionally, forms an efflux pump with AaeA. Could function as a metabolic relief valve, allowing to eliminate certain compounds when they accumulate to high levels in the cell. The chain is p-hydroxybenzoic acid efflux pump subunit AaeB from Escherichia coli O81 (strain ED1a).